The primary structure comprises 386 residues: Succinate--CoA ligase [ADP-forming] subunit beta (386 aa).

An ATP-grasp domain is found at 9-244 (KQILKRFGIS…YDEEIPEEIE (236 aa)). ATP-binding positions include K46, 53 to 55 (GRG), E99, C102, and E107. Mg(2+) contacts are provided by N199 and D213. Substrate contacts are provided by residues N264 and 320–322 (GIM).

Belongs to the succinate/malate CoA ligase beta subunit family. In terms of assembly, heterotetramer of two alpha and two beta subunits. Mg(2+) is required as a cofactor.

It carries out the reaction succinate + ATP + CoA = succinyl-CoA + ADP + phosphate. The catalysed reaction is GTP + succinate + CoA = succinyl-CoA + GDP + phosphate. It participates in carbohydrate metabolism; tricarboxylic acid cycle; succinate from succinyl-CoA (ligase route): step 1/1. Its function is as follows. Succinyl-CoA synthetase functions in the citric acid cycle (TCA), coupling the hydrolysis of succinyl-CoA to the synthesis of either ATP or GTP and thus represents the only step of substrate-level phosphorylation in the TCA. The beta subunit provides nucleotide specificity of the enzyme and binds the substrate succinate, while the binding sites for coenzyme A and phosphate are found in the alpha subunit. The polypeptide is Succinate--CoA ligase [ADP-forming] subunit beta (Ehrlichia ruminantium (strain Welgevonden)).